We begin with the raw amino-acid sequence, 363 residues long: GDP-fucose transporter (363 aa).

8 consecutive transmembrane segments (helical) span residues 30–47 (VITAVSAYWVFSIGLVFL), 62–79 (FITWYQCLVTVFLCLFLS), 126–148 (VSFYYVGRSLTTVFNVVCTYLIL), 152–171 (TSGQAIGCCALIIFGFLLGV), 180–202 (LSYTGVIFGVLASLSVALNAIYT), 222–244 (LNALVLFLPLMLFNGEFGAVFYF), 251–273 (TFWILMTLGGVFGFMMGYVTGWQ), and 307–326 (LLWWTSNFVVLFGSGMYTYV). The disordered stretch occupies residues 334-363 (KNSGASPASEAKSDKVKLLGRDGNAAEESV). Residues 344-353 (AKSDKVKLLG) are compositionally biased toward basic and acidic residues.

Belongs to the TPT transporter family. SLC35C subfamily.

The protein localises to the golgi apparatus membrane. Functionally, involved in GDP-fucose import from the cytoplasm into the Golgi lumen. This is GDP-fucose transporter from Caenorhabditis elegans.